Here is a 175-residue protein sequence, read N- to C-terminus: Auxin-responsive protein IAA28 (175 aa).

The segment at 1–39 (MEEEKRLELRLAPPCHQFTSNNNINGSKQKSSTKETSFL) is disordered. The short motif at 7 to 11 (LELRL) is the EAR-like (transcriptional repression) element. The span at 17–39 (QFTSNNNINGSKQKSSTKETSFL) shows a compositional bias: polar residues. Positions 80-161 (ELYVKINMEG…TVKRLHVLKT (82 aa)) constitute a PB1 domain.

The protein belongs to the Aux/IAA family. In terms of assembly, homodimers and heterodimers. Interacts with TPL. As to expression, in roots and inflorescence stems.

Its subcellular location is the nucleus. Its function is as follows. Aux/IAA proteins are short-lived transcriptional factors that function as repressors of early auxin response genes at low auxin concentrations. Repression is thought to result from the interaction with auxin response factors (ARFs), proteins that bind to the auxin-responsive promoter element (AuxRE). Formation of heterodimers with ARF proteins may alter their ability to modulate early auxin response genes expression. The sequence is that of Auxin-responsive protein IAA28 (IAA28) from Arabidopsis thaliana (Mouse-ear cress).